The sequence spans 476 residues: 3-isopropylmalate dehydratase large subunit (476 aa).

The [4Fe-4S] cluster site is built by Cys353, Cys413, and Cys416.

Belongs to the aconitase/IPM isomerase family. LeuC type 1 subfamily. Heterodimer of LeuC and LeuD. [4Fe-4S] cluster is required as a cofactor.

The catalysed reaction is (2R,3S)-3-isopropylmalate = (2S)-2-isopropylmalate. Its pathway is amino-acid biosynthesis; L-leucine biosynthesis; L-leucine from 3-methyl-2-oxobutanoate: step 2/4. Catalyzes the isomerization between 2-isopropylmalate and 3-isopropylmalate, via the formation of 2-isopropylmaleate. The chain is 3-isopropylmalate dehydratase large subunit from Yersinia pseudotuberculosis serotype O:1b (strain IP 31758).